A 283-amino-acid chain; its full sequence is Lactoylglutathione lyase GLX1 (283 aa).

The residue at position 2 (alanine 2) is an N-acetylalanine. VOC domains follow at residues 17–141 and 147–275; these read RFLH…LIQR and PFCQ…LVDN. Residue histidine 20 participates in Zn(2+) binding. Arginine 24 contributes to the substrate binding site. Position 71 (glutamate 71) interacts with Zn(2+). Substrate is bound by residues asparagine 75 and histidine 89. Residues histidine 89, glutamate 137, and glutamine 150 each contribute to the Zn(2+) site. Glutamate 137 serves as the catalytic Proton donor/acceptor. Substrate-binding residues include glutamine 150 and arginine 154. A divalent metal cation is bound at residue glutamine 150. Glutamate 201 is a binding site for Zn(2+). Residue glutamate 201 participates in a divalent metal cation binding. Asparagine 205 contributes to the substrate binding site. A divalent metal cation is bound at residue glutamine 219. Residue 251 to 252 coordinates substrate; the sequence is PL. Residue valine 271 coordinates a divalent metal cation.

The protein belongs to the glyoxalase I family. In terms of assembly, homodimer. It depends on Zn(2+) as a cofactor. Post-translationally, phosphorylated by SnRK2.8.

The enzyme catalyses (R)-S-lactoylglutathione = methylglyoxal + glutathione. It functions in the pathway secondary metabolite metabolism; methylglyoxal degradation; (R)-lactate from methylglyoxal: step 1/2. In terms of biological role, catalyzes the conversion of hemimercaptal, formed from methylglyoxal and glutathione, to S-lactoylglutathione. The chain is Lactoylglutathione lyase GLX1 from Arabidopsis thaliana (Mouse-ear cress).